Reading from the N-terminus, the 261-residue chain is MLHIADTTLTSRLLTGTGKFATPELMLAALEASGSQLVTMAMKRVDLNGGNDAILAPLRQLGIKLLPNTSGAKTADEAIFAARLAREALGTHWLKLEIHPDVKYLLPDPIETLKAAEQLVKEGFTVLPYCGADPVLCKRLEEVGCAAVMPLGAPIGSNQGLQTRDFLRIIIEQARVPVIVDAGIGAPSQAADALEMGADAVLVNTAIAVARDPVAMARAFRLAVEAGGLARQAGLGSKQFVASATSPLTGFLHQQAEGAVR.

Lys-95 serves as the catalytic Schiff-base intermediate with DXP. 1-deoxy-D-xylulose 5-phosphate-binding positions include Gly-156, 182–183 (AG), and 204–205 (NT).

The protein belongs to the ThiG family. Homotetramer. Forms heterodimers with either ThiH or ThiS.

The protein localises to the cytoplasm. The catalysed reaction is [ThiS sulfur-carrier protein]-C-terminal-Gly-aminoethanethioate + 2-iminoacetate + 1-deoxy-D-xylulose 5-phosphate = [ThiS sulfur-carrier protein]-C-terminal Gly-Gly + 2-[(2R,5Z)-2-carboxy-4-methylthiazol-5(2H)-ylidene]ethyl phosphate + 2 H2O + H(+). It functions in the pathway cofactor biosynthesis; thiamine diphosphate biosynthesis. Its function is as follows. Catalyzes the rearrangement of 1-deoxy-D-xylulose 5-phosphate (DXP) to produce the thiazole phosphate moiety of thiamine. Sulfur is provided by the thiocarboxylate moiety of the carrier protein ThiS. In vitro, sulfur can be provided by H(2)S. This chain is Thiazole synthase, found in Pectobacterium carotovorum subsp. carotovorum (strain PC1).